The sequence spans 279 residues: Release factor glutamine methyltransferase (279 aa).

S-adenosyl-L-methionine-binding residues include Asp139 and Asn182. A substrate-binding site is contributed by 182 to 185; that stretch reads NPPY.

The protein belongs to the protein N5-glutamine methyltransferase family. PrmC subfamily.

It carries out the reaction L-glutaminyl-[peptide chain release factor] + S-adenosyl-L-methionine = N(5)-methyl-L-glutaminyl-[peptide chain release factor] + S-adenosyl-L-homocysteine + H(+). Functionally, methylates the class 1 translation termination release factors RF1/PrfA and RF2/PrfB on the glutamine residue of the universally conserved GGQ motif. The polypeptide is Release factor glutamine methyltransferase (Thermodesulfovibrio yellowstonii (strain ATCC 51303 / DSM 11347 / YP87)).